A 171-amino-acid chain; its full sequence is Dual specificity protein phosphatase OPG106 (171 aa).

In terms of domain architecture, Tyrosine-protein phosphatase spans 23 to 171 (SPTIMTRVTN…IIEKYVIDKN (149 aa)). The active-site Phosphocysteine intermediate is C110.

This sequence belongs to the protein-tyrosine phosphatase family. Non-receptor class dual specificity subfamily. As to quaternary structure, homodimer.

It localises to the virion. The protein resides in the host cytoplasm. The catalysed reaction is O-phospho-L-tyrosyl-[protein] + H2O = L-tyrosyl-[protein] + phosphate. It catalyses the reaction O-phospho-L-seryl-[protein] + H2O = L-seryl-[protein] + phosphate. In terms of biological role, serine/tyrosine phosphatase which down-regulates cellular antiviral response by dephosphorylating activated host STAT1 and blocking interferon (IFN)-stimulated innate immune responses. Dephosphorylates the OPG144 protein. The polypeptide is Dual specificity protein phosphatase OPG106 (OPG106) (Homo sapiens (Human)).